Consider the following 397-residue polypeptide: Elongation factor Tu (397 aa).

A tr-type G domain is found at 10–207 (KPHVNIGTIG…AVDTYIEEPK (198 aa)). Positions 19 to 26 (GHVDHGKT) are G1. Residue 19 to 26 (GHVDHGKT) participates in GTP binding. Thr-26 contributes to the Mg(2+) binding site. The G2 stretch occupies residues 60-64 (GITIN). The tract at residues 81-84 (DCPG) is G3. GTP-binding positions include 81–85 (DCPGH) and 136–139 (NKID). The tract at residues 136-139 (NKID) is G4. The segment at 177–179 (SAL) is G5.

It belongs to the TRAFAC class translation factor GTPase superfamily. Classic translation factor GTPase family. EF-Tu/EF-1A subfamily. In terms of assembly, monomer.

Its subcellular location is the cytoplasm. It catalyses the reaction GTP + H2O = GDP + phosphate + H(+). Functionally, GTP hydrolase that promotes the GTP-dependent binding of aminoacyl-tRNA to the A-site of ribosomes during protein biosynthesis. The chain is Elongation factor Tu from Metamycoplasma hominis (strain ATCC 23114 / DSM 25592 / NBRC 14850 / NCTC 10111 / PG21) (Mycoplasma hominis).